Here is a 61-residue protein sequence, read N- to C-terminus: Large ribosomal subunit protein uL30 (61 aa).

This sequence belongs to the universal ribosomal protein uL30 family. In terms of assembly, part of the 50S ribosomal subunit.

In Chlorobium luteolum (strain DSM 273 / BCRC 81028 / 2530) (Pelodictyon luteolum), this protein is Large ribosomal subunit protein uL30.